A 704-amino-acid polypeptide reads, in one-letter code: Elongation factor G (704 aa).

A tr-type G domain is found at Ala-9 to Leu-285. GTP is bound by residues Ala-18–Thr-25, Asp-82–His-86, and Asn-136–Asp-139.

The protein belongs to the TRAFAC class translation factor GTPase superfamily. Classic translation factor GTPase family. EF-G/EF-2 subfamily.

The protein localises to the cytoplasm. In terms of biological role, catalyzes the GTP-dependent ribosomal translocation step during translation elongation. During this step, the ribosome changes from the pre-translocational (PRE) to the post-translocational (POST) state as the newly formed A-site-bound peptidyl-tRNA and P-site-bound deacylated tRNA move to the P and E sites, respectively. Catalyzes the coordinated movement of the two tRNA molecules, the mRNA and conformational changes in the ribosome. This is Elongation factor G from Thermobifida fusca (strain YX).